The primary structure comprises 706 residues: Glycine--tRNA ligase beta subunit (706 aa).

The protein belongs to the class-II aminoacyl-tRNA synthetase family. Tetramer of two alpha and two beta subunits.

The protein localises to the cytoplasm. The enzyme catalyses tRNA(Gly) + glycine + ATP = glycyl-tRNA(Gly) + AMP + diphosphate. This Acidobacterium capsulatum (strain ATCC 51196 / DSM 11244 / BCRC 80197 / JCM 7670 / NBRC 15755 / NCIMB 13165 / 161) protein is Glycine--tRNA ligase beta subunit.